The sequence spans 453 residues: DNA repair protein RadA (453 aa).

The C4-type zinc finger occupies 10–27; sequence CTECGATFPKWAGQCADC. 96–103 lines the ATP pocket; it reads GDPGIGKS. The RadA KNRFG motif signature appears at 252-256; it reads KNRFG. Positions 351 to 453 are lon-protease-like; it reads DVFLNVVGGV…LEQALDALFE (103 aa).

This sequence belongs to the RecA family. RadA subfamily.

In terms of biological role, DNA-dependent ATPase involved in processing of recombination intermediates, plays a role in repairing DNA breaks. Stimulates the branch migration of RecA-mediated strand transfer reactions, allowing the 3' invading strand to extend heteroduplex DNA faster. Binds ssDNA in the presence of ADP but not other nucleotides, has ATPase activity that is stimulated by ssDNA and various branched DNA structures, but inhibited by SSB. Does not have RecA's homology-searching function. In Pseudomonas aeruginosa (strain ATCC 15692 / DSM 22644 / CIP 104116 / JCM 14847 / LMG 12228 / 1C / PRS 101 / PAO1), this protein is DNA repair protein RadA.